The primary structure comprises 1011 residues: Protein FAM83B (1011 aa).

Residues 1–283 are DUF1669; the sequence is METSSMLSSL…RTLYARSCVP (283 aa). Residues 1–284 form a required for interaction with RAF1 and for the function region; the sequence is METSSMLSSL…TLYARSCVPS (284 aa). Phosphoserine is present on residues serine 334, serine 422, serine 424, serine 466, and serine 543. Residues 555-585 form a disordered region; the sequence is EVNSCTTGSSNSTIIGSQGSETPKEVPDTPT. Low complexity predominate over residues 557-574; the sequence is NSCTTGSSNSTIIGSQGS. Serine 664 bears the Phosphoserine mark. Disordered stretches follow at residues 691 to 738 and 750 to 769; these read NRVR…TKSV and ESNK…SFLK. A compositionally biased stretch (basic and acidic residues) spans 694-705; sequence RQPEKPKEDLLK. Polar residues-rich tracts occupy residues 706-715 and 727-738; these read SSKSMHNVTH and RNSPSGTTTKSV. The span at 750–762 shows a compositional bias: basic and acidic residues; it reads ESNKELASKKEVK. Residue threonine 782 is modified to Phosphothreonine. Position 802 is a phosphoserine (serine 802). The disordered stretch occupies residues 807–928; that stretch reads LVSEGEENQK…TSSELLRSHS (122 aa). The segment covering 813–828 has biased composition (basic and acidic residues); sequence ENQKPKKSDTKVDSSP. Phosphoserine is present on residues serine 852, serine 869, and serine 915. Residues 913–923 are compositionally biased toward low complexity; sequence TSSPRPTSSEL.

The protein belongs to the FAM83 family. In terms of assembly, interacts with EGFR; positively regulates EGFR inducing its autophosphorylation in absence of stimulation by EGF. Interacts with RAF1; displaces 14-3-3 proteins from RAF1 and activates RAF1 within the RAS/MAPK signaling cascade. Interacts with AKT1, PIK3CA and PIK3R1; activates the PI3K/AKT signaling cascade. Directly interacts (via DUF1669) with casein kinase isoforms CSNK1A1, CSNK1A1L, CSNK1D and CSNK1E. In terms of processing, phosphorylated in vitro by CSNK1A1.

It is found in the cytoplasm. Its subcellular location is the membrane. Functionally, probable proto-oncogene that functions in the epidermal growth factor receptor/EGFR signaling pathway. Activates both the EGFR itself and downstream RAS/MAPK and PI3K/AKT/TOR signaling cascades. This chain is Protein FAM83B, found in Homo sapiens (Human).